A 644-amino-acid polypeptide reads, in one-letter code: Ribonuclease R (644 aa).

The 319-residue stretch at 211–529 (RINYSHIPFI…LHRLLKELLF (319 aa)) folds into the RNB domain. The S1 motif domain occupies 573-644 (LELLEKEFLG…ITERIKEHVS (72 aa)).

Belongs to the RNR ribonuclease family. RNase R subfamily.

The protein localises to the cytoplasm. It catalyses the reaction Exonucleolytic cleavage in the 3'- to 5'-direction to yield nucleoside 5'-phosphates.. Its function is as follows. 3'-5' exoribonuclease that releases 5'-nucleoside monophosphates and is involved in maturation of structured RNAs. This is Ribonuclease R from Helicobacter pylori (strain ATCC 700392 / 26695) (Campylobacter pylori).